The following is a 200-amino-acid chain: MLDVIELDFDYHDQPLLQQISFHLPAGGLLHLKGSNGAGKTTLLKLIAGLLNPEKGEILFERQSIKKDLCTYQKQLCFVGHRSGINPYLTLRENCLYDIHFSPGAVGITELCRLFSLEHLIDYPCGLLSSGQKRQVALLRLWMSKAKLWLLDEPLVALDELSLLTIITKIQEHRAKGGAVLLTSHQDLPLNKADYEEYHL.

One can recognise an ABC transporter domain in the interval 2 to 200; that stretch reads LDVIELDFDY…NKADYEEYHL (199 aa). Residue 34–41 coordinates ATP; that stretch reads GSNGAGKT.

It belongs to the ABC transporter superfamily. CcmA exporter (TC 3.A.1.107) family. The complex is composed of two ATP-binding proteins (CcmA) and two transmembrane proteins (CcmB).

The protein resides in the cell inner membrane. The catalysed reaction is heme b(in) + ATP + H2O = heme b(out) + ADP + phosphate + H(+). Its function is as follows. Part of the ABC transporter complex CcmAB involved in the biogenesis of c-type cytochromes; once thought to export heme, this seems not to be the case, but its exact role is uncertain. Responsible for energy coupling to the transport system. In Legionella pneumophila (strain Paris), this protein is Cytochrome c biogenesis ATP-binding export protein CcmA.